A 33-amino-acid polypeptide reads, in one-letter code: Large ribosomal subunit protein uL24 (33 aa).

Belongs to the universal ribosomal protein uL24 family. Component of the large ribosomal subunit.

The protein resides in the cytoplasm. In terms of biological role, component of the large ribosomal subunit. The ribosome is a large ribonucleoprotein complex responsible for the synthesis of proteins in the cell. The sequence is that of Large ribosomal subunit protein uL24 (rpl26) from Xenopus laevis (African clawed frog).